Reading from the N-terminus, the 469-residue chain is Putative dipeptidase SAR1836 (469 aa).

A Zn(2+)-binding site is contributed by His84. Asp86 is an active-site residue. Asp115 contributes to the Zn(2+) binding site. The active-site Proton acceptor is Glu149. 3 residues coordinate Zn(2+): Glu150, Asp173, and His440.

It belongs to the peptidase M20A family. Zn(2+) is required as a cofactor.

This chain is Putative dipeptidase SAR1836, found in Staphylococcus aureus (strain MRSA252).